A 962-amino-acid polypeptide reads, in one-letter code: Glycine dehydrogenase (decarboxylating) (962 aa).

Lys-709 carries the post-translational modification N6-(pyridoxal phosphate)lysine.

The protein belongs to the GcvP family. In terms of assembly, the glycine cleavage system is composed of four proteins: P, T, L and H. Requires pyridoxal 5'-phosphate as cofactor.

The catalysed reaction is N(6)-[(R)-lipoyl]-L-lysyl-[glycine-cleavage complex H protein] + glycine + H(+) = N(6)-[(R)-S(8)-aminomethyldihydrolipoyl]-L-lysyl-[glycine-cleavage complex H protein] + CO2. In terms of biological role, the glycine cleavage system catalyzes the degradation of glycine. The P protein binds the alpha-amino group of glycine through its pyridoxal phosphate cofactor; CO(2) is released and the remaining methylamine moiety is then transferred to the lipoamide cofactor of the H protein. The chain is Glycine dehydrogenase (decarboxylating) from Shewanella oneidensis (strain ATCC 700550 / JCM 31522 / CIP 106686 / LMG 19005 / NCIMB 14063 / MR-1).